The sequence spans 206 residues: Large ribosomal subunit protein uL3 (206 aa).

The segment at 127 to 151 (SGGPSSHGSKFHRHLGGTGQATTPA) is disordered.

Belongs to the universal ribosomal protein uL3 family. In terms of assembly, part of the 50S ribosomal subunit. Forms a cluster with proteins L14 and L19.

Functionally, one of the primary rRNA binding proteins, it binds directly near the 3'-end of the 23S rRNA, where it nucleates assembly of the 50S subunit. The sequence is that of Large ribosomal subunit protein uL3 from Borreliella burgdorferi (strain ATCC 35210 / DSM 4680 / CIP 102532 / B31) (Borrelia burgdorferi).